Reading from the N-terminus, the 202-residue chain is Potassium-transporting ATPase KdpC subunit (202 aa).

Residues 7–27 (PAIFVLLALTLITGLLYPLAM) form a helical membrane-spanning segment. Residues 66–103 (FHGRPSATSTADPNDSTKTVPAPYNAANSSGSNLGPTS) form a disordered region. Composition is skewed to polar residues over residues 71-84 (SATS…STKT) and 91-101 (AANSSGSNLGP).

This sequence belongs to the KdpC family. In terms of assembly, the system is composed of three essential subunits: KdpA, KdpB and KdpC.

Its subcellular location is the cell inner membrane. Part of the high-affinity ATP-driven potassium transport (or Kdp) system, which catalyzes the hydrolysis of ATP coupled with the electrogenic transport of potassium into the cytoplasm. This subunit acts as a catalytic chaperone that increases the ATP-binding affinity of the ATP-hydrolyzing subunit KdpB by the formation of a transient KdpB/KdpC/ATP ternary complex. This chain is Potassium-transporting ATPase KdpC subunit, found in Bradyrhizobium sp. (strain ORS 278).